Consider the following 819-residue polypeptide: Ferric-pyoverdine 358 receptor (819 aa).

The signal sequence occupies residues 1–47; that stretch reads MSKPLPSALNPLAKALLIRHSLRPRHALSRIGMGLALSSALVFQVQA. Positions 115–122 match the TonB box motif; sequence NTVTVTAS. In terms of domain architecture, TBDR plug spans 166–276; sequence SIRETPQTIT…PSAVVNVIRK (111 aa). Residues 281–819 form the TBDR beta-barrel domain; the sequence is EFKSHIQAGV…NATVTLRYDF (539 aa). The TonB C-terminal box signature appears at 802-819; that stretch reads YGHYGAPRNATVTLRYDF.

The protein belongs to the TonB-dependent receptor family.

It is found in the cell outer membrane. Specific receptor for the siderophore ferric pyoverdine (pseudobactin) 358. In Pseudomonas putida (Arthrobacter siderocapsulatus), this protein is Ferric-pyoverdine 358 receptor (pupA).